Here is a 200-residue protein sequence, read N- to C-terminus: Dephospho-CoA kinase (200 aa).

The 197-residue stretch at 4-200 folds into the DPCK domain; that stretch reads VIGLTGGIAS…AILKKWNIID (197 aa). 12–17 lines the ATP pocket; the sequence is ASGKST.

It belongs to the CoaE family.

Its subcellular location is the cytoplasm. The catalysed reaction is 3'-dephospho-CoA + ATP = ADP + CoA + H(+). It participates in cofactor biosynthesis; coenzyme A biosynthesis; CoA from (R)-pantothenate: step 5/5. Its function is as follows. Catalyzes the phosphorylation of the 3'-hydroxyl group of dephosphocoenzyme A to form coenzyme A. The chain is Dephospho-CoA kinase from Bacillus anthracis.